Here is a 940-residue protein sequence, read N- to C-terminus: Isoleucine--tRNA ligase (940 aa).

The short motif at 58 to 68 is the 'HIGH' region element; sequence PYANGNIHIGH. Glu-563 serves as a coordination point for L-isoleucyl-5'-AMP. Residues 604-608 carry the 'KMSKS' region motif; sequence KMSKS. Lys-607 lines the ATP pocket. Zn(2+) contacts are provided by Cys-903, Cys-906, Cys-923, and Cys-926.

Belongs to the class-I aminoacyl-tRNA synthetase family. IleS type 1 subfamily. As to quaternary structure, monomer. It depends on Zn(2+) as a cofactor.

The protein resides in the cytoplasm. The catalysed reaction is tRNA(Ile) + L-isoleucine + ATP = L-isoleucyl-tRNA(Ile) + AMP + diphosphate. Functionally, catalyzes the attachment of isoleucine to tRNA(Ile). As IleRS can inadvertently accommodate and process structurally similar amino acids such as valine, to avoid such errors it has two additional distinct tRNA(Ile)-dependent editing activities. One activity is designated as 'pretransfer' editing and involves the hydrolysis of activated Val-AMP. The other activity is designated 'posttransfer' editing and involves deacylation of mischarged Val-tRNA(Ile). In Buchnera aphidicola subsp. Acyrthosiphon pisum (strain 5A), this protein is Isoleucine--tRNA ligase.